Consider the following 518-residue polypeptide: Ent-cassadiene hydroxylase (518 aa).

Residues 6–26 (LILALGLSVLFVLLSKLVSSA) traverse the membrane as a helical segment. Position 451 (Cys451) interacts with heme.

The protein belongs to the cytochrome P450 family. It depends on heme as a cofactor.

It is found in the membrane. It catalyses the reaction ent-cassa-12,15-diene + 3 reduced [NADPH--hemoprotein reductase] + 3 O2 = ent-3beta-hydroxycassa-12,15-dien-2-one + 3 oxidized [NADPH--hemoprotein reductase] + 4 H2O + 3 H(+). In terms of biological role, enzyme of the diterpenoid metabolism involved in the biosynthesis of antibacterial oryzalides such as phytocassane. Catalyzes the hydroxylation of ent-cassa-12,15-diene to form ent-3beta-hydroxycassa-12,15-dien-2-one. The protein is Ent-cassadiene hydroxylase (CYP71Z7) of Oryza sativa subsp. japonica (Rice).